We begin with the raw amino-acid sequence, 288 residues long: Centromere protein P (288 aa).

A coiled-coil region spans residues 1 to 71; it reads MDAELAEVRA…HLESELSFLS (71 aa). S38 bears the Phosphoserine mark.

The protein belongs to the CENP-P/CTF19 family. Component of the CENPA-CAD complex, composed of CENPI, CENPK, CENPL, CENPO, CENPP, CENPQ, CENPR and CENPS. The CENPA-CAD complex interacts with the CENPA-NAC complex, at least composed of CENPA, CENPC, CENPH, CENPM, CENPN, CENPT and CENPU.

It is found in the nucleus. Its subcellular location is the chromosome. It localises to the centromere. Component of the CENPA-CAD (nucleosome distal) complex, a complex recruited to centromeres which is involved in assembly of kinetochore proteins, mitotic progression and chromosome segregation. May be involved in incorporation of newly synthesized CENPA into centromeres via its interaction with the CENPA-NAC complex. This is Centromere protein P (CENPP) from Homo sapiens (Human).